Consider the following 486-residue polypeptide: FAD-dependent oxidoreductase domain-containing protein 1 (486 aa).

Residues 66 to 82 (VVIVGGGVLGLSVAYWL) traverse the membrane as a helical segment.

Associates with components of the mitochondrial respiratory chain complex I. Requires FAD as cofactor.

It localises to the mitochondrion inner membrane. Its function is as follows. Required for the assembly of the mitochondrial membrane respiratory chain NADH dehydrogenase (Complex I). Involved in mid-late stages of complex I assembly. The sequence is that of FAD-dependent oxidoreductase domain-containing protein 1 (FOXRED1) from Bos taurus (Bovine).